The following is an 84-amino-acid chain: MAYLKIVLVALMLVVAVSAMRLSDQEDQDISVAKRAACKCDDDGPDIRSATLTGTVDLGSCNEGWEKCASFYTILADCCRRPRG.

An N-terminal signal peptide occupies residues 1–19 (MAYLKIVLVALMLVVAVSA). Residues 20–33 (MRLSDQEDQDISVA) constitute a propeptide that is removed on maturation. Disulfide bonds link Cys38–Cys78, Cys40–Cys68, and Cys61–Cys79. Gly84 is a propeptide.

It belongs to the sea anemone sodium channel inhibitory toxin family. Type II subfamily.

The protein localises to the secreted. It localises to the nematocyst. Binds specifically to voltage-gated sodium channels (Nav), thereby delaying their inactivation during signal transduction. In Stichodactyla gigantea (Giant carpet anemone), this protein is Delta-stichotoxin-Sgt3a.